The following is a 1132-amino-acid chain: Mediator of RNA polymerase II transcription subunit 5 (1132 aa).

Positions 998–1023 (KGDVDIKGEDLHEKNDSAEVRQETQP) are enriched in basic and acidic residues. The disordered stretch occupies residues 998–1070 (KGDVDIKGED…RTNNVPMIKA (73 aa)). Residues 1047–1057 (YEEEEENEDND) show a composition bias toward acidic residues.

The protein belongs to the Mediator complex subunit 5 family. In terms of assembly, component of the Mediator complex, which is composed of at least 21 subunits that form three structurally distinct submodules. The Mediator head module contains MED6, MED8, MED11, SRB4/MED17, SRB5/MED18, ROX3/MED19, SRB2/MED20 and SRB6/MED22, the middle module contains MED1, MED4, NUT1/MED5, MED7, CSE2/MED9, NUT2/MED10, SRB7/MED21 and SOH1/MED31, and the tail module contains MED2, PGD1/MED3, RGR1/MED14, GAL11/MED15 and SIN4/MED16. The head and the middle modules interact directly with RNA polymerase II, whereas the elongated tail module interacts with gene-specific regulatory proteins.

The protein resides in the nucleus. In terms of biological role, component of the Mediator complex, a coactivator involved in the regulated transcription of nearly all RNA polymerase II-dependent genes. Mediator functions as a bridge to convey information from gene-specific regulatory proteins to the basal RNA polymerase II transcription machinery. The Mediator complex, having a compact conformation in its free form, is recruited to promoters by direct interactions with regulatory proteins and serves for the assembly of a functional preinitiation complex with RNA polymerase II and the general transcription factors. The Mediator complex unfolds to an extended conformation and partially surrounds RNA polymerase II, specifically interacting with the unphosphorylated form of the C-terminal domain (CTD) of RNA polymerase II. The Mediator complex dissociates from the RNA polymerase II holoenzyme and stays at the promoter when transcriptional elongation begins. The protein is Mediator of RNA polymerase II transcription subunit 5 (NUT1) of Saccharomyces cerevisiae (strain ATCC 204508 / S288c) (Baker's yeast).